Here is a 91-residue protein sequence, read N- to C-terminus: Large ribosomal subunit protein bL28 (91 aa).

Belongs to the bacterial ribosomal protein bL28 family.

This Protochlamydia amoebophila (strain UWE25) protein is Large ribosomal subunit protein bL28.